Reading from the N-terminus, the 166-residue chain is MWTAPVLLWVLGSVWFWDSAQGGAIGALEDDLVTPGPGDDMVNPGLEDRIETTDTTGELDKSTAKAPLVPTQPPIEELPTSGTSDHDHKEHESTTTVKAVTSHSTDKKTTHPNRDNAGGETQTTDKKDGLAVVTLVGIIIGVLLAIGFIGGIIIVVMRKISGRFSP.

The first 22 residues, 1 to 22 (MWTAPVLLWVLGSVWFWDSAQG), serve as a signal peptide directing secretion. At 23–135 (GAIGALEDDL…KKDGLAVVTL (113 aa)) the chain is on the extracellular side. 4 O-linked (GalNAc...) threonine glycosylation sites follow: Thr34, Thr52, Thr55, and Thr56. Positions 54–63 (DTTGELDKST) are enriched in basic and acidic residues. The segment at 54-124 (DTTGELDKST…DNAGGETQTT (71 aa)) is disordered. A glycan (O-linked (GalNAc...) serine) is linked at Ser62. O-linked (GalNAc...) threonine glycans are attached at residues Thr63, Thr71, and Thr80. Ser81 carries O-linked (GalNAc...) serine glycosylation. O-linked (GalNAc...) threonine glycosylation occurs at Thr83. The O-linked (GalNAc...) serine glycan is linked to Ser84. Residues 84–93 (SDHDHKEHES) show a composition bias toward basic and acidic residues. O-linked (GalNAc...) threonine glycosylation is found at Thr94, Thr95, Thr96, Thr101, Thr105, Thr109, and Thr110. The span at 94-103 (TTTVKAVTSH) shows a compositional bias: polar residues. The segment covering 104–114 (STDKKTTHPNR) has biased composition (basic and acidic residues). A helical transmembrane segment spans residues 136-156 (VGIIIGVLLAIGFIGGIIIVV). Residues 137 to 141 (GIIIG) form a requires for dimerization and lipid rafts association region. Residues 157-166 (MRKISGRFSP) are Cytoplasmic-facing. The tract at residues 158–159 (RK) is requires for interaction with MSN and EZR.

This sequence belongs to the podoplanin family. As to quaternary structure, homodimer. Interacts with CLEC1B; the interaction is independent of CLEC1B glycosylation and activates CLEC1B; the interaction is dependent of sialic acid on O-glycans. Interacts with CD9; this interaction is homophilic and attenuates platelet aggregation and pulmonary metastasis induced by PDPN. Interacts with LGALS8; the interaction is glycosylation-dependent; may participate in connection of the lymphatic endothelium to the surrounding extracellular matrix. Interacts with HSPA9. Interacts (via extracellular domain) with CD44; this interaction is required for PDPN-mediated directional migration and regulation of lamellipodia extension/stabilization during cell spreading and migration. Interacts (via cytoplasmic domain) with MSN and EZR; activates RHOA and promotes epithelial-mesenchymal transition. Interacts with CCL21; relocalized PDPN to the basolateral membrane. Post-translationally, extensively O-glycosylated. Contains sialic acid residues. O-glycosylation is necessary for platelet aggregation activity. Disialylated at Thr-52; sialic acid is critical for platelet-aggregating activity and for CLEC1B interaction. The N-terminus is blocked. In terms of tissue distribution, in adult kidney, expressed on the urinary surface and foot processes of podocytes and in parietal epithelial cells of Bowman's capsule where it is localized to luminal surfaces. In lung, expressed exclusively on luminal surfaces of type I alveolar epithelial cells and pleural mesothelial cells. Not expressed in type II alveolar cells. In bone, expressed in osteocytes and osteoblasts. In spleen, liver, stomach and intestine, expressed in mesoepithelium. Also expressed in thymic epithelial cells, choroid plexus and leptomeninges.

It is found in the membrane. The protein resides in the cell projection. Its subcellular location is the lamellipodium membrane. The protein localises to the filopodium membrane. It localises to the microvillus membrane. It is found in the ruffle membrane. The protein resides in the membrane raft. Its subcellular location is the apical cell membrane. The protein localises to the basolateral cell membrane. It localises to the invadopodium. Functionally, mediates effects on cell migration and adhesion through its different partners. During development plays a role in blood and lymphatic vessels separation by binding CLEC1B, triggering CLEC1B activation in platelets and leading to platelet activation and/or aggregation. Interaction with CD9, on the contrary, attenuates platelet aggregation and pulmonary metastasis induced by PDPN. Mediates effects on cell migration and adhesion through its different partners. Through MSN or EZR interaction promotes epithelial-mesenchymal transition (EMT) leading to ERZ phosphorylation and triggering RHOA activation leading to cell migration increase and invasiveness. Interaction with CD44 promotes directional cell migration in epithelial and tumor cells. In lymph nodes (LNs), controls fibroblastic reticular cells (FRCs) adhesion to the extracellular matrix (ECM) and contraction of the actomyosin by maintaining ERM proteins (EZR; MSN and RDX) and MYL9 activation through association with unknown transmembrane proteins. Engagement of CLEC1B by PDPN promotes FRCs relaxation by blocking lateral membrane interactions leading to reduction of ERM proteins (EZR; MSN and RDX) and MYL9 activation. Through binding with LGALS8 may participate in connection of the lymphatic endothelium to the surrounding extracellular matrix. In keratinocytes, induces changes in cell morphology showing an elongated shape, numerous membrane protrusions, major reorganization of the actin cytoskeleton, increased motility and decreased cell adhesion. Controls invadopodia stability and maturation leading to efficient degradation of the extracellular matrix (ECM) in tumor cells through modulation of RHOC activity in order to activate ROCK1/ROCK2 and LIMK1/LIMK2 and inactivation of CFL1. Required for normal lung cell proliferation and alveolus formation at birth. Does not function as a water channel or as a regulator of aquaporin-type water channels. Does not have any effect on folic acid or amino acid transport. The sequence is that of Podoplanin from Rattus norvegicus (Rat).